We begin with the raw amino-acid sequence, 602 residues long: MSDSDYVDYPSYNILKKIVIKDGLRAFKFFKKIIDNTSQGSVGILKCVVSDESIYVDEECEQISSREFMTINNNQNERYIIYKIGTETPYLCRHEFAVSVSLDKLSPFLPNFMKPYDLIKNVRADPRQKNPFVTLIEEKSGSEKMRLTTKKSKPKTFSDMALFEYINSNMTLAELISINVKGKRQTRVTLNEEIQKIKASDFKIINSLLNQLMIAILIAQKKLSFIHNDLHFDNVLICKCLQRTFMLYVFEYNSICYALLPTYGYYPIIIDYGFSFSEDLIGGPLLTGIHHNNKGYMNHQYDEFTDFKTMLTRLSYSGYQFGLDKKDAFQSLIFDKLISKLPIDKQTGWDETKDISVSKQLVRHIRIFVDDYLKSINRESFFQKYDYEMVDMIGSLIILPLRKKNTENLVETLAIFFKEWLKIEKWIGSSHMKIFVFKNIIDKIRSDVLCSNNTPTSSFSLRENSVSLQETLQNFQKTIYKIMNEVGDNIILTGLNYELFYKSILKLSDCFEGIMYKFNQKCISRKTKEYSKMEMKSSLEMYQLVEPFISNDYQLECGDYFVVCNSINETTSSFVLKDLETVNTVNSMDRADRAEYLFKSMV.

It belongs to the IIV-6 098R family.

This is an uncharacterized protein from Acheta domesticus (House cricket).